A 1086-amino-acid polypeptide reads, in one-letter code: Tyrosine-protein kinase receptor svh-2 (1086 aa).

Residues 1 to 34 (MVLGSSQSSAKELTTQSSIFRFLVLLLCFTSATG) form the signal peptide. Topologically, residues 35–651 (GQINGKLLNG…DKKGSSPGWK (617 aa)) are extracellular. N-linked (GlcNAc...) asparagine glycosylation is found at asparagine 276, asparagine 299, asparagine 461, asparagine 554, and asparagine 617. A helical transmembrane segment spans residues 652-672 (IAIAIISVMTIILIVAIIVYY). The Cytoplasmic portion of the chain corresponds to 673-1086 (MRNRFPRIKT…LLSECSETSV (414 aa)). In terms of domain architecture, Protein kinase spans 735–996 (VDKLDPIGQG…SDLVTIIPNV (262 aa)). ATP-binding positions include 741 to 749 (IGQGHYGVV) and lysine 767. The active-site Proton acceptor is the aspartate 858. At tyrosine 890 the chain carries Phosphotyrosine. Residues 1056 to 1086 (AELPSDSPSTSTAIPQSTPYQLLSECSETSV) are disordered. Polar residues predominate over residues 1061-1086 (DSPSTSTAIPQSTPYQLLSECSETSV).

Belongs to the protein kinase superfamily. Tyr protein kinase family. As to quaternary structure, interacts (via cytoplasmic domain) with mlk-1. Interacts with shc-1 (via SH2 domain). May interact (when tyrosine-phosphorylated) with tns-1 (via SH2 domain). In terms of processing, may be autophosphorylated on Tyr-890 following dimerization. In terms of tissue distribution, expressed in body wall and vulva muscles, pharynx, intestine, excretory canals, distal tip cells and some neurons. Expressed in D-type motor neurons upon axon injury.

Its subcellular location is the cell membrane. The enzyme catalyses L-tyrosyl-[protein] + ATP = O-phospho-L-tyrosyl-[protein] + ADP + H(+). Functionally, receptor tyrosine kinase which may phosphorylate mlk-1, a component of the mlk-1, mek-1 and kgb-1 pathway. Involved in axon regeneration after injury by promoting the generation of productive and stable growth cones. This is Tyrosine-protein kinase receptor svh-2 from Caenorhabditis elegans.